We begin with the raw amino-acid sequence, 565 residues long: MTAYIQRSQCISTSLLVVLTTLVSCQIPRDRLSNIGVIVDEGKSLKIAGSHESRYIVLSLVPGVDLENGCGTAQVIQYKSLLNRLLIPLRDALDLQEALITVTNDTTQNAGVPQSRFFGAVIGTIALGVATSAQITAGIALAEAREAKRDIALIKESMTKTHKSVELLQNAVGEQILALKTLQDFVNDEIKPAISELGCETAALRLGIKLTQHYFGLLTAFGSNFGTIGEKSRTLQALSSLYSANITEIMTTIRTGQSNIYDVIYTEQIKGTVIDVDLERYMVTLSVKIPILSEVPGVLIHKASSISYNIDGEEWYVTVPSHILSRASFLGGADITDCVESRLTYICPRDPAQLIPDSQQKCILGDTTRCPVTKVVDSLIPKFAFVNGGVVANRIASTCTCGTGRRPISQDRSKGVAFLTHDNCGLIGVNGVELYANRRGHDATWGVQNLTVGPAIAIRPVDISLNLADATNFLQDSKAELEKARKILSEVGRWYNSRETVITIIVVMVVILVVIIVIVIVLYRLKRSMLMGNPDERIPRDTYTLEPKIRHMYTNGGFDAMAEKR.

The first 25 residues, 1–25 (MTAYIQRSQCISTSLLVVLTTLVSC), serve as a signal peptide directing secretion. Topologically, residues 26–500 (QIPRDRLSNI…VGRWYNSRET (475 aa)) are extracellular. A disulfide bridge links cysteine 70 with cysteine 199. Asparagine 104 is a glycosylation site (N-linked (GlcNAc...) asparagine; by host). The segment at 117–141 (FFGAVIGTIALGVATSAQITAGIAL) is fusion peptide. A coiled-coil region spans residues 142–170 (AEAREAKRDIALIKESMTKTHKSVELLQN). N-linked (GlcNAc...) asparagine; by host glycosylation occurs at asparagine 245. The interval 278 to 306 (LERYMVTLSVKIPILSEVPGVLIHKASSI) is leucine-zipper. 3 cysteine pairs are disulfide-bonded: cysteine 338–cysteine 347, cysteine 362–cysteine 370, and cysteine 401–cysteine 424. Asparagine 449 is a glycosylation site (N-linked (GlcNAc...) asparagine; by host). A coiled-coil region spans residues 466-491 (NLADATNFLQDSKAELEKARKILSEV). Residues 501-521 (VITIIVVMVVILVVIIVIVIV) form a helical membrane-spanning segment. The Cytoplasmic segment spans residues 522 to 565 (LYRLKRSMLMGNPDERIPRDTYTLEPKIRHMYTNGGFDAMAEKR).

Belongs to the paramyxoviruses fusion glycoprotein family. As to quaternary structure, homotrimer of disulfide-linked F1-F2. Interacts with HN and M proteins. Post-translationally, in natural infection, inactive F0 is matured into F1 and F2 outside the cell by one or more trypsin-like, arginine-specific endoprotease secreted by the bronchial epithelial cells. One identified protease that may be involved in this process is tryptase Clara. Unlike most paramyxoviruses, Sendai F0 processing occurs on the cell surface and induces a conformational change in the protein that unmasks the fusion peptide. F0 maturation is a primary determinant for organ tropism and pathogenicity. F1 and F2 display interchain and intrachain disulfide bonds, that are necessary for correct folding and intracellular transport. N-glycosylated; glycans consist of a mixture of high mannose-type oligosaccharides and of complex-type oligosaccharides. Glycosylation at Asn-245 is essential for membrane localization and F0 cleavage.

It is found in the virion membrane. Its subcellular location is the host cell membrane. Functionally, class I viral fusion protein. Under the current model, the protein has at least 3 conformational states: pre-fusion native state, pre-hairpin intermediate state, and post-fusion hairpin state. During viral and plasma cell membrane fusion, the heptad repeat (HR) regions assume a trimer-of-hairpins structure, positioning the fusion peptide in close proximity to the C-terminal region of the ectodomain. The formation of this structure appears to drive apposition and subsequent fusion of viral and plasma cell membranes. Directs fusion of viral and cellular membranes leading to delivery of the nucleocapsid into the cytoplasm. This fusion is pH independent and occurs directly at the outer cell membrane. The trimer of F1-F2 (F protein) interacts with HN tetramer at the virion surface. Upon HN binding to its cellular receptor, the hydrophobic fusion peptide is unmasked and interacts with the cellular membrane, inducing the fusion between cell and virion membranes. Later in infection, F proteins expressed at the plasma membrane of infected cells could mediate fusion with adjacent cells to form syncytia, a cytopathic effect that could lead to tissue necrosis. In Cavia cutleri (Guinea pig), this protein is Fusion glycoprotein F0 (F).